Reading from the N-terminus, the 374-residue chain is Alanine racemase (374 aa).

The active-site Proton acceptor; specific for D-alanine is the K40. K40 is subject to N6-(pyridoxal phosphate)lysine. R139 is a binding site for substrate. Y261 functions as the Proton acceptor; specific for L-alanine in the catalytic mechanism. M309 contributes to the substrate binding site.

Belongs to the alanine racemase family. The cofactor is pyridoxal 5'-phosphate.

The catalysed reaction is L-alanine = D-alanine. Its pathway is amino-acid biosynthesis; D-alanine biosynthesis; D-alanine from L-alanine: step 1/1. Catalyzes the interconversion of L-alanine and D-alanine. May also act on other amino acids. The protein is Alanine racemase (alr) of Rhodospirillum rubrum (strain ATCC 11170 / ATH 1.1.1 / DSM 467 / LMG 4362 / NCIMB 8255 / S1).